The primary structure comprises 990 residues: Bacteriophage adsorption protein A (990 aa).

Residues 1–27 (MKENNLNRVIGWSGLLLTSLLSTSALA) form the signal peptide. TPR repeat units lie at residues 81-114 (IPLT…HPGD), 612-645 (ANAY…EPNN), and 646-679 (SNTQ…LPDD).

In terms of assembly, (Microbial infection) Interacts with N4 phage non-contractile sheath protein; this interaction is essential for viral adsorption to the host.

It is found in the cell outer membrane. (Microbial infection) Allows N4 phage attachment by binding to the viral non-contractile sheath protein. This is Bacteriophage adsorption protein A (nfrA) from Escherichia coli (strain K12).